The following is a 248-amino-acid chain: Probable transcriptional regulatory protein Bind_0345 (248 aa).

The protein belongs to the TACO1 family.

The protein resides in the cytoplasm. This Beijerinckia indica subsp. indica (strain ATCC 9039 / DSM 1715 / NCIMB 8712) protein is Probable transcriptional regulatory protein Bind_0345.